A 581-amino-acid polypeptide reads, in one-letter code: Amino-acid acetyltransferase, mitochondrial (581 aa).

An N-acetyltransferase domain is found at 401–558 (FTLHNLIEDE…RIVGSEAVNI (158 aa)).

This sequence belongs to the acetyltransferase family.

The protein resides in the mitochondrion. The enzyme catalyses L-glutamate + acetyl-CoA = N-acetyl-L-glutamate + CoA + H(+). The protein operates within amino-acid biosynthesis; L-arginine biosynthesis; N(2)-acetyl-L-ornithine from L-glutamate: step 1/4. In terms of biological role, N-acetylglutamate synthase involved in arginine biosynthesis. The protein is Amino-acid acetyltransferase, mitochondrial (ARG2) of Scheffersomyces stipitis (strain ATCC 58785 / CBS 6054 / NBRC 10063 / NRRL Y-11545) (Yeast).